Reading from the N-terminus, the 195-residue chain is Urease accessory protein UreG (195 aa).

GTP is bound at residue 9–16 (GPVGSGKT).

Belongs to the SIMIBI class G3E GTPase family. UreG subfamily. Homodimer. UreD, UreF and UreG form a complex that acts as a GTP-hydrolysis-dependent molecular chaperone, activating the urease apoprotein by helping to assemble the nickel containing metallocenter of UreC. The UreE protein probably delivers the nickel.

It localises to the cytoplasm. In terms of biological role, facilitates the functional incorporation of the urease nickel metallocenter. This process requires GTP hydrolysis, probably effectuated by UreG. The sequence is that of Urease accessory protein UreG from Aliarcobacter butzleri (strain RM4018) (Arcobacter butzleri).